The chain runs to 149 residues: Large ribosomal subunit protein bL9 (149 aa).

Belongs to the bacterial ribosomal protein bL9 family.

Its function is as follows. Binds to the 23S rRNA. In Legionella pneumophila (strain Paris), this protein is Large ribosomal subunit protein bL9.